The following is a 1709-amino-acid chain: MEGSKRDIIENSNNGNNKGVVIEELGETYYTNSKPSTSADCKYFRDSFEFGSNNNNNNNNNNNNNNNNNNNNNNNNNNNNNNNNNNNNEEKSNNETEKTLESNGDTTTTTTTNNNNNNNNNNNNNNNNNNNNNNNNNNNNNNNNNNTNSSNDIYMNSPSSTLSSPGNAGNNLPIGCTKPNVPKSPYSPSPPHLYKSNSTSYLKSSFFSGNGSSSSSSSTTTTNINSNNSNTNTYSTSTNVKKNNSNTNSNTNNNTNGNTNTNSNSNKKNINSNSSDNIIINDTADIMNRRRDRFKSFSWTIGESNSNSKFSELSMISSKCKSIKSEFTPLFETLTVFDESDKIRHSLIQNHYKTLLIQNPASPNRTLLTNLLQRRGHNLTTCPIDINHVLQLLQKESFSLFIFDPNESIINNTSNSISSNEPISLSSSSSYYNNNNSNNNSVNNNNNNNSGNSTNNNSPSSHTPNSPMIFQPIVSNICSNSGGSGNNSPHHIDNNNNSNQQQQQQQQQQQQQQQHQHQQQQQQSSSTTATTNNSCTLNQQQQQQQQQQQQQQQQQQQQQQSQPTTPTQSTQSPTTSISFSKKKNLTINTSFKTSPMSSPKSFNKPSQSPQNIFNNFSNTYNPNNIEFCKILKSKLTEFETVIVLTESTDPSEFCQYIDAGATDYIPQPISPILLDLRLTTCQKLVNNNLHLKKAESLKDATRKMVTCIENSPDCVEIWDPSGHIQYLNLAFSEMTGFARWELLGKEFSNLIDNTEIIPNMWATLTDKKTWNGFIRTRHNNNTLIYFEASISPVLDQFQQILYYNCTKRDVTQKRIDEESKTLEQNKIIEKSRLRLSMMSHDIRTPMSNIIGMADLLLDTSLSQHQHHYLEIIKNSSNTLLTIINDILDISKIEAGKLDIDYESFDFNATVSQVVESMAQRVQSKGLELLSYVDPKIPNILIGPSSRLNQILTNLLGNSLKFTDKGEISICCLLNDETDSEYEIKVDVRDTGIGIKKEALPLLFKAFTQAEGTITRQYGGSGLGLAICKELVHLAFNGEISVESQYGHGSTFTCILKFKKFLPSDSQNLLPASSPLQQQQQQQQHQQQTQFHQHQQQTQFHQHQQQQLQHQQHQQHQQLQQQQQQQQQLQQQLQQHQQHQLQQRQHHQQQLQQQQHHHHQQVHLQQQQQHEHDAQHNQHIQQQQQQQQQQQQQQQQHEHNNNGHHNSHGHNHHGSHHNHNHQHNNNNNNITINKLQHQEKKQKSNEQQLESITENSFSPIVEPMVISDPDTPEALNISQSPSPQSIHNGTTINQQPTSPLNTLGSKFDFSGAKMLFIERNDTSRGNLFKQLLAWNIQLELVEDGESGFRKWKQSIESNSPYSIIIMDLNTPGVDGASLPMRIKKELELMQQHLQQQQEQEQQQQQEQQQSELQKQPDVENKNSSQNNDNNNNNNKSNSSGGNQCIYRSPIIMLMPIQFLNSQLEDNLKDAGVCAILSKPIRMSQLADVFMMYLGPNSEHNNNNNYNNNNGNGYLNGGGGGGGSVNGTGNGTLQVGMSNDGGNGCGVVSFWNKQRRASAEEQEQDPSKLLGKVLVVDDNHINIQILSKMLQTVGCEVDSVLSGADALAKINQSSGDSYDAIFLDIQMPDMDGFQVSRKIREREKKFSLPRVAIIATTANVFKEDQLKCFDAGMDDFISKPIKRAEIKEIIKKYGKNGNHQSGSAYSLYKLS.

Disordered stretches follow at residues 52 to 192 (SNNN…SPPH), 206 to 276 (FFSG…NSSD), 413 to 535 (TSNS…NNSC), and 554 to 615 (QQQQ…IFNN). Over residues 53–87 (NNNNNNNNNNNNNNNNNNNNNNNNNNNNNNNNNNN) the composition is skewed to low complexity. Over residues 88-100 (NEEKSNNETEKTL) the composition is skewed to basic and acidic residues. Residues 106–148 (TTTTTTTNNNNNNNNNNNNNNNNNNNNNNNNNNNNNNNNNNTN) show a composition bias toward low complexity. Residues 149-170 (SSNDIYMNSPSSTLSSPGNAGN) show a composition bias toward polar residues. 3 stretches are compositionally biased toward low complexity: residues 413–466 (TSNS…TPNS), 486–535 (NNSP…NNSC), and 554–576 (QQQQ…PTTS). A compositionally biased stretch (polar residues) spans 585-610 (LTINTSFKTSPMSSPKSFNKPSQSPQ). One can recognise a PAS domain in the interval 700–771 (ATRKMVTCIE…ATLTDKKTWN (72 aa)). A PAC domain is found at 770-822 (WNGFIRTRHNNNTLIYFEASISPVLDQFQQILYYNCTKRDVTQKRIDEESKTL). One can recognise a Histidine kinase domain in the interval 837-1059 (MMSHDIRTPM…TFTCILKFKK (223 aa)). His840 is modified (phosphohistidine; by autocatalysis). 2 disordered regions span residues 1068 to 1112 (LLPA…HQQH) and 1137 to 1298 (QHQL…PTSP). 3 stretches are compositionally biased toward low complexity: residues 1075–1112 (LQQQ…HQQH), 1137–1153 (QHQL…LQQQ), and 1176–1194 (NQHI…QQQQ). Residues 1204 to 1221 (HNSHGHNHHGSHHNHNHQ) show a composition bias toward basic residues. Composition is skewed to polar residues over residues 1244–1257 (NEQQ…NSFS) and 1275–1298 (NISQ…PTSP). Response regulatory domains follow at residues 1312–1492 (KMLF…MMYL) and 1570–1692 (KVLV…KKYG). Asp1366 carries the 4-aspartylphosphate modification. Composition is skewed to low complexity over residues 1390 to 1412 (QHLQ…SELQ) and 1420 to 1440 (KNSS…SSGG). The interval 1390-1440 (QHLQQQQEQEQQQQQEQQQSELQKQPDVENKNSSQNNDNNNNNNKSNSSGG) is disordered. Asp1622 carries the 4-aspartylphosphate modification.

Activation probably requires transfer of a phosphate group between a histidine in the kinase core (transmitter) domain and an aspartate of the receiver domain.

It carries out the reaction ATP + protein L-histidine = ADP + protein N-phospho-L-histidine.. Its function is as follows. Acts as a receptor histidine kinase for a signal transduction pathway. This protein undergoes an ATP-dependent autophosphorylation at a conserved histidine residue in the kinase core, and a phosphoryl group is then transferred to a conserved aspartate residue in the receiver domain. The polypeptide is Hybrid signal transduction histidine kinase L (dhkL) (Dictyostelium discoideum (Social amoeba)).